Reading from the N-terminus, the 105-residue chain is MIYTTTDTIPGKEIAEVRGVVTGNVVQSKHIGRDLMAGLKSIVGGEIRGYTEMMTEARDIAIQRMVEQANQKGADAIVGIRFTTSSIVDGSSEILAFGTAVKLVE.

The protein belongs to the UPF0145 family.

This Vibrio parahaemolyticus serotype O3:K6 (strain RIMD 2210633) protein is UPF0145 protein VP1283.